A 158-amino-acid polypeptide reads, in one-letter code: Non-secretory ribonuclease (158 aa).

A signal peptide spans 1-27 (MVPKLFTSQICLLLLLGLLGVEGSLHA). Histidine 42 acts as the Proton acceptor in catalysis. Cystine bridges form between cysteine 50–cysteine 110, cysteine 64–cysteine 121, cysteine 82–cysteine 136, and cysteine 89–cysteine 98. At tyrosine 60 the chain carries 3'-nitrotyrosine. 65–69 (KNQNT) contacts substrate. Residues asparagine 86, asparagine 92, and asparagine 111 are each glycosylated (N-linked (GlcNAc...) asparagine). Histidine 153 acts as the Proton donor in catalysis.

This sequence belongs to the pancreatic ribonuclease family. Interacts with and forms a tight 1:1 complex with RNH1. Dimerization of two such complexes may occur.

The protein localises to the lysosome. It localises to the cytoplasmic granule. The enzyme catalyses an [RNA] containing cytidine + H2O = an [RNA]-3'-cytidine-3'-phosphate + a 5'-hydroxy-ribonucleotide-3'-[RNA].. It carries out the reaction an [RNA] containing uridine + H2O = an [RNA]-3'-uridine-3'-phosphate + a 5'-hydroxy-ribonucleotide-3'-[RNA].. This is a non-secretory ribonuclease. It is a pyrimidine specific nuclease with a slight preference for U. Cytotoxin and helminthotoxin. Possesses a wide variety of biological activities. This chain is Non-secretory ribonuclease (RNASE2), found in Aotus trivirgatus (Three-striped night monkey).